A 101-amino-acid polypeptide reads, in one-letter code: MVKSEMKLVIFSLFLLLIGVESLKNGYPVIEGGGSPDYGESAECGSEDSNSADNFCNDICTNVGGKSGDCCLGSCFCFDLPDEQKTVEVMDRTKEYCEFVE.

The signal sequence occupies residues 1–20 (MVKSEMKLVIFSLFLLLIGV). Residues 24-98 (KNGYPVIEGG…VMDRTKEYCE (75 aa)) form the LCN-type CS-alpha/beta domain. 4 disulfide bridges follow: C44/C70, C56/C75, C60/C77, and C71/C97.

This sequence belongs to the long (4 C-C) scorpion toxin superfamily. Sodium channel inhibitor family. Beta subfamily. As to expression, expressed by the venom gland.

It is found in the secreted. Excitatory insect beta-toxins induce a spastic paralysis. They bind voltage-independently at site-4 of sodium channels (Nav) and shift the voltage of activation toward more negative potentials thereby affecting sodium channel activation and promoting spontaneous and repetitive firing. This Tityus pachyurus (Colombian scorpion) protein is Toxin Tpa8.